Consider the following 238-residue polypeptide: Ribonuclease PH (238 aa).

Phosphate contacts are provided by residues Arg86 and 124-126 (GTR).

It belongs to the RNase PH family. In terms of assembly, homohexameric ring arranged as a trimer of dimers.

The enzyme catalyses tRNA(n+1) + phosphate = tRNA(n) + a ribonucleoside 5'-diphosphate. Its function is as follows. Phosphorolytic 3'-5' exoribonuclease that plays an important role in tRNA 3'-end maturation. Removes nucleotide residues following the 3'-CCA terminus of tRNAs; can also add nucleotides to the ends of RNA molecules by using nucleoside diphosphates as substrates, but this may not be physiologically important. Probably plays a role in initiation of 16S rRNA degradation (leading to ribosome degradation) during starvation. In Haemophilus influenzae (strain PittGG), this protein is Ribonuclease PH.